We begin with the raw amino-acid sequence, 384 residues long: Lipid-A-disaccharide synthase (384 aa).

This sequence belongs to the LpxB family.

It carries out the reaction a lipid X + a UDP-2-N,3-O-bis[(3R)-3-hydroxyacyl]-alpha-D-glucosamine = a lipid A disaccharide + UDP + H(+). It functions in the pathway bacterial outer membrane biogenesis; LPS lipid A biosynthesis. In terms of biological role, condensation of UDP-2,3-diacylglucosamine and 2,3-diacylglucosamine-1-phosphate to form lipid A disaccharide, a precursor of lipid A, a phosphorylated glycolipid that anchors the lipopolysaccharide to the outer membrane of the cell. The chain is Lipid-A-disaccharide synthase from Geobacter metallireducens (strain ATCC 53774 / DSM 7210 / GS-15).